Here is a 125-residue protein sequence, read N- to C-terminus: Small ribosomal subunit protein eS8 (125 aa).

The protein belongs to the eukaryotic ribosomal protein eS8 family. Part of the 30S ribosomal subunit.

This is Small ribosomal subunit protein eS8 from Methanocella arvoryzae (strain DSM 22066 / NBRC 105507 / MRE50).